Reading from the N-terminus, the 85-residue chain is Electron transfer flavoprotein regulatory factor 1 homolog (85 aa).

The protein belongs to the complex I LYR family. As to expression, highly expressed in the larval fat body.

It is found in the mitochondrion. Acts as a regulator of the electron transfer flavoprotein by promoting the removal of flavin from the ETF holoenzyme. May act with the ETF complex to coordinate lipid homeostasis in the fat body in response to stage-specific demands. This Drosophila melanogaster (Fruit fly) protein is Electron transfer flavoprotein regulatory factor 1 homolog.